The chain runs to 79 residues: MSFNNPDHQLDAIGLRCPEPVMMVRAAIRKMNDGETLLIIADDPSTTRDIPSFCTFMDHTLVAKDAEQAPYRYVVKKGL.

The Cysteine persulfide intermediate role is filled by Cys-17.

The protein belongs to the sulfur carrier protein TusA family.

It is found in the cytoplasm. Its function is as follows. Sulfur carrier protein which probably makes part of a sulfur-relay system. The chain is Sulfur carrier protein TusA from Pseudoalteromonas translucida (strain TAC 125).